Reading from the N-terminus, the 435-residue chain is Chromatin structure-remodeling complex subunit RSC7 (435 aa).

The tract at residues 1–97 (MSDSEGGLAS…DKGVTRSRNR (97 aa)) is disordered. Acidic residues predominate over residues 30-66 (DTEDLDIDENDENEDDDYREEEANEGVNEEEISDEEE). A Phosphoserine modification is found at serine 86. Residues 248 to 435 (ELRTKGNVIE…QNFEKCNEYI (188 aa)) are functional region; able to complement all NPL6 null allele phenotypes.

Belongs to the RSC7/SWP82 family. RSC7 subfamily. In terms of assembly, interacts with ARP7, ARP9, RSC3, RSC8, RSC30 and STH1. Component of the two forms of the RSC complex composed of at least either RSC1 or RSC2, and ARP7, ARP9, LDB7, NPL6, RSC3, RSC30, RSC4, RSC58, RSC6, RSC8, RSC9, SFH1, STH1, HTL1 and probably RTT102. The complexes interact with histone and histone variant components of centromeric chromatin. Component of a fungal-specific module (HTL1-LDB7-NPL6-RSC3-RSC30) within the RSC complex.

Its subcellular location is the nucleus. Its function is as follows. Component of the chromatin structure remodeling complex (RSC), which is involved in transcription regulation and nucleosome positioning. RSC is responsible for the transfer of a histone octamer from a nucleosome core particle to naked DNA. The reaction requires ATP and involves an activated RSC-nucleosome intermediate. Remodeling reaction also involves DNA translocation, DNA twist and conformational change. As a reconfigurer of centromeric and flanking nucleosomes, RSC complex is required both for proper kinetochore function in chromosome segregation and, via a PKC1-dependent signaling pathway, for organization of the cellular cytoskeleton. Together with HTL1, LDB7, RSC3, RSC30 components, defines a fungal-specific module within the RSC complex that plays a role in many cellular functions including the maintenance of cell wall integrity. Acidic protein important for nuclear protein localization. This is Chromatin structure-remodeling complex subunit RSC7 (NPL6) from Saccharomyces cerevisiae (strain ATCC 204508 / S288c) (Baker's yeast).